The following is a 223-amino-acid chain: Thiamine-phosphate synthase (223 aa).

4-amino-2-methyl-5-(diphosphooxymethyl)pyrimidine is bound by residues 47-51 (QLRDK) and N84. 2 residues coordinate Mg(2+): D85 and D104. 4-amino-2-methyl-5-(diphosphooxymethyl)pyrimidine is bound at residue S123. 2-[(2R,5Z)-2-carboxy-4-methylthiazol-5(2H)-ylidene]ethyl phosphate is bound at residue 150–152 (TPT). Position 153 (K153) interacts with 4-amino-2-methyl-5-(diphosphooxymethyl)pyrimidine. Residue G182 coordinates 2-[(2R,5Z)-2-carboxy-4-methylthiazol-5(2H)-ylidene]ethyl phosphate.

This sequence belongs to the thiamine-phosphate synthase family. It depends on Mg(2+) as a cofactor.

The enzyme catalyses 2-[(2R,5Z)-2-carboxy-4-methylthiazol-5(2H)-ylidene]ethyl phosphate + 4-amino-2-methyl-5-(diphosphooxymethyl)pyrimidine + 2 H(+) = thiamine phosphate + CO2 + diphosphate. The catalysed reaction is 2-(2-carboxy-4-methylthiazol-5-yl)ethyl phosphate + 4-amino-2-methyl-5-(diphosphooxymethyl)pyrimidine + 2 H(+) = thiamine phosphate + CO2 + diphosphate. It catalyses the reaction 4-methyl-5-(2-phosphooxyethyl)-thiazole + 4-amino-2-methyl-5-(diphosphooxymethyl)pyrimidine + H(+) = thiamine phosphate + diphosphate. It functions in the pathway cofactor biosynthesis; thiamine diphosphate biosynthesis; thiamine phosphate from 4-amino-2-methyl-5-diphosphomethylpyrimidine and 4-methyl-5-(2-phosphoethyl)-thiazole: step 1/1. Condenses 4-methyl-5-(beta-hydroxyethyl)thiazole monophosphate (THZ-P) and 2-methyl-4-amino-5-hydroxymethyl pyrimidine pyrophosphate (HMP-PP) to form thiamine monophosphate (TMP). This Saccharopolyspora erythraea (strain ATCC 11635 / DSM 40517 / JCM 4748 / NBRC 13426 / NCIMB 8594 / NRRL 2338) protein is Thiamine-phosphate synthase.